The primary structure comprises 119 residues: Ribonuclease P protein component (119 aa).

The protein belongs to the RnpA family. Consists of a catalytic RNA component (M1 or rnpB) and a protein subunit.

It catalyses the reaction Endonucleolytic cleavage of RNA, removing 5'-extranucleotides from tRNA precursor.. In terms of biological role, RNaseP catalyzes the removal of the 5'-leader sequence from pre-tRNA to produce the mature 5'-terminus. It can also cleave other RNA substrates such as 4.5S RNA. The protein component plays an auxiliary but essential role in vivo by binding to the 5'-leader sequence and broadening the substrate specificity of the ribozyme. This is Ribonuclease P protein component from Listeria innocua serovar 6a (strain ATCC BAA-680 / CLIP 11262).